Consider the following 353-residue polypeptide: UDP-N-acetylenolpyruvoylglucosamine reductase (353 aa).

One can recognise an FAD-binding PCMH-type domain in the interval 31-201; that stretch reads LASHAPAFVA…GSVRFALPRP (171 aa). Arginine 177 is an active-site residue. Serine 250 functions as the Proton donor in the catalytic mechanism. Glutamate 346 is an active-site residue.

The protein belongs to the MurB family. FAD is required as a cofactor.

The protein resides in the cytoplasm. It catalyses the reaction UDP-N-acetyl-alpha-D-muramate + NADP(+) = UDP-N-acetyl-3-O-(1-carboxyvinyl)-alpha-D-glucosamine + NADPH + H(+). It participates in cell wall biogenesis; peptidoglycan biosynthesis. Functionally, cell wall formation. The sequence is that of UDP-N-acetylenolpyruvoylglucosamine reductase from Bordetella parapertussis (strain 12822 / ATCC BAA-587 / NCTC 13253).